A 228-amino-acid polypeptide reads, in one-letter code: UPF0758 protein CLI_3057 (228 aa).

The 123-residue stretch at 106–228 (KINTPLDVSN…YVSMKEKGTI (123 aa)) folds into the MPN domain. Zn(2+) contacts are provided by His-177, His-179, and Asp-190. Positions 177 to 190 (HNHPSGDPTPSKED) match the JAMM motif motif.

Belongs to the UPF0758 family.

The protein is UPF0758 protein CLI_3057 of Clostridium botulinum (strain Langeland / NCTC 10281 / Type F).